The following is a 687-amino-acid chain: MMTQTLLIELLTEELPPKALNNLGNHFAASVAEGLEKAQLVDGAAEFTAYASPRRLAVQVKNVKAVQADQKIVKKGPAVANAMKDGAPTKALEGFARGAGAKIEDLTIVHDGKQDVYAYEYVQIGKPLGGLLEDIINQAVKKLPIPKVMRWGSSTFTFVRPVHGLVVLHGGDIVNVSVLGLQSGNKTLGHRFLSDGEITIENADSYAAQMREQGKVVASFAERKAAIQTVLEGQARRLNATAAADEALLDEVTALVEWPVVLEAGFEEHFLAVPQECLILTMQQNQKYFPLLDQNGKLMNRFLLVSNLQTEDPSHIIQGNERVLRARLSDAEFFYKQDQKATLESRLPKLTNVVYHNKIGSQAERIERLQSIAAHIAKALGADAAAAERAARLAKADLVTEMVGEFPELQGTMGKYYARLDGETEEITEAVEQHYQPRFAGDNLPEGKIAAAVALADKLETLVGIWGIGLIPTGDKDPYALRRAALGILRMLMQYGLDVNELIQTAFNSFPQGLLNEKTPSETADFMQARLAVLLQNDYPQDIVAAVLAKQPRRLDDLTAKLQAVAAFKQLPEAAALAAANKRVQNLLKKADAELGAVNESLLQQDEEKALFAAAQGLQPKIAAAVAEGNFQTALSELASVKPQVDAFFDGVMVMAEDAAVKQNRLNLLNRLAEQMNAVADIALLGE.

This sequence belongs to the class-II aminoacyl-tRNA synthetase family. In terms of assembly, tetramer of two alpha and two beta subunits.

It localises to the cytoplasm. The catalysed reaction is tRNA(Gly) + glycine + ATP = glycyl-tRNA(Gly) + AMP + diphosphate. The chain is Glycine--tRNA ligase beta subunit from Neisseria meningitidis serogroup B (strain ATCC BAA-335 / MC58).